We begin with the raw amino-acid sequence, 490 residues long: Cytochrome P450 2C7 (490 aa).

Dimethylated arginine is present on R144. Heme is bound at residue C435.

Belongs to the cytochrome P450 family. The cofactor is heme.

The protein resides in the endoplasmic reticulum membrane. The protein localises to the microsome membrane. It catalyses the reaction an organic molecule + reduced [NADPH--hemoprotein reductase] + O2 = an alcohol + oxidized [NADPH--hemoprotein reductase] + H2O + H(+). Functionally, cytochromes P450 are a group of heme-thiolate monooxygenases. In liver microsomes, this enzyme is involved in an NADPH-dependent electron transport pathway. It oxidizes a variety of structurally unrelated compounds, including steroids, fatty acids, and xenobiotics. The protein is Cytochrome P450 2C7 (Cyp2c7) of Rattus norvegicus (Rat).